Here is a 651-residue protein sequence, read N- to C-terminus: MBT domain-containing protein 1 (651 aa).

The interval 21 to 55 (SFGMFDGYDSCSEDTSSSSSSDESEEEVAPLPSSL) is disordered. Positions 29–41 (DSCSEDTSSSSSS) are enriched in low complexity. Residues 68 to 103 (PDGKSGMATCEMCGMVGVRDAFYSKTKRFCSVSCSR) form an FCS-type zinc finger. Residues Cys-77, Cys-80, Cys-97, and Cys-101 each coordinate Zn(2+). 4 MBT repeats span residues 164–268 (FSWG…LVPP), 276–373 (TNWK…IGHR), 374–479 (FKRT…LTPP), and 487–583 (FKWF…LQPP). 2 disordered regions span residues 581 to 610 (QPPA…YKGH) and 629 to 651 (TFLQ…KQEP). Residues 586 to 596 (QSNKDSQSNIS) show a composition bias toward low complexity. Basic residues predominate over residues 597-610 (KQKKKSKSQPYKGH). Over residues 632-643 (QGASDQESNGSG) the composition is skewed to polar residues.

Monomer. Component of the NuA4 histone acetyltransferase complex.

It is found in the nucleus. The protein localises to the chromosome. Functionally, chromatin reader component of the NuA4 histone acetyltransferase complex, a multiprotein complex involved in transcriptional activation of select genes principally by acetylation of nucleosomal histones H4 and H2A. The NuA4 complex plays a direct role in repair of DNA double-strand breaks (DSBs) by promoting homologous recombination (HR). MBTD1 specifically recognizes and binds monomethylated and dimethylated 'Lys-20' on histone H4 (H4K20me1 and H4K20me2, respectively). In the NuA4 complex, MBTD1 promotes recruitment of the complex to H4K20me marks by competing with TP53BP1 for binding to H4K20me. Following recruitment to H4K20me at DNA breaks, the NuA4 complex catalyzes acetylation of 'Lys-15' on histone H2A (H2AK15), blocking the ubiquitination mark required for TP53BP1 localization at DNA breaks, thereby promoting homologous recombination (HR). The protein is MBT domain-containing protein 1 of Xenopus tropicalis (Western clawed frog).